The primary structure comprises 324 residues: Olfactory receptor 11H4 (324 aa).

Residues 1–35 (MSFFFVDLRPMNRSATHIVTEFILLGFPGCWKIQI) are Extracellular-facing. Asparagine 12 carries an N-linked (GlcNAc...) asparagine glycan. Residues 36–56 (FLFSLFLVIYVLTLLGNGAII) form a helical membrane-spanning segment. Residues 57–64 (YAVRCNPL) lie on the Cytoplasmic side of the membrane. Residues 65 to 85 (LHTPMYFLLGNFAFLEIWYVS) traverse the membrane as a helical segment. Topologically, residues 86 to 109 (STIPNMLVNILSKTKAISFSGCFL) are extracellular. Residues cysteine 107 and cysteine 199 are joined by a disulfide bond. A helical membrane pass occupies residues 110–130 (QFYFFFSLGTTECLFLAVMAY). Residues 131-149 (DRYLAICHPLQYPAIMTVR) lie on the Cytoplasmic side of the membrane. The chain crosses the membrane as a helical span at residues 150–170 (FCGKLVSFCWLIGFLGYPIPI). Over 171–207 (FYISQLPFCGPNIIDHFLCDMDPLMALSCAPAPITEC) the chain is Extracellular. The chain crosses the membrane as a helical span at residues 208–227 (IFYTQSSLVLFFTSMYILRS). Residues 228–247 (YILLLTAVFQVPSAAGRRKA) lie on the Cytoplasmic side of the membrane. The chain crosses the membrane as a helical span at residues 248-268 (FSTCGSHLVVVSLFYGTVMVM). The Extracellular portion of the chain corresponds to 269–281 (YVSPTYGIPTLLQ). Residues 282–302 (KILTLVYSVTTPLFNPLIYTL) form a helical membrane-spanning segment. Topologically, residues 303–324 (RNKDMKLALRNVLFGMRIRQNS) are cytoplasmic.

The protein belongs to the G-protein coupled receptor 1 family.

Its subcellular location is the cell membrane. In terms of biological role, odorant receptor. The chain is Olfactory receptor 11H4 (OR11H4) from Homo sapiens (Human).